Here is a 913-residue protein sequence, read N- to C-terminus: Chitin synthase 1 (913 aa).

The tract at residues 1 to 135 (MAYRGGGPND…QQPGAQTGGL (135 aa)) is disordered. N-linked (GlcNAc...) asparagine glycosylation is present at Asn-25. Basic and acidic residues predominate over residues 41–56 (RDPHARGTSPYEHHLG). A glycan (N-linked (GlcNAc...) asparagine) is linked at Asn-539. 7 helical membrane passes run 566–586 (FFFHIQLIYNVLNVIFTWFSL), 625–645 (IINSILQYLYLAFLVIQFVLA), 658–678 (IASFIVFGFIQTYILVLSGYL), 712–732 (VILVALVTIYGLNFIASFMYL), 740–760 (SFPYYLVLMSTYINILMVYAF), 840–860 (TGLVVSWLFSNAALIVFITTD), and 881–901 (FLLYSTAVLALVRFTGFLWFL).

It belongs to the chitin synthase family. Class III subfamily.

It is found in the cell membrane. It carries out the reaction [(1-&gt;4)-N-acetyl-beta-D-glucosaminyl](n) + UDP-N-acetyl-alpha-D-glucosamine = [(1-&gt;4)-N-acetyl-beta-D-glucosaminyl](n+1) + UDP + H(+). In terms of biological role, polymerizes chitin, a structural polymer of the cell wall and septum, by transferring the sugar moiety of UDP-GlcNAc to the non-reducing end of the growing chitin polymer. Plays a role in cell wall integrity and is involved in tolerance to hyperosmotic conditions. Required to successfully penetrate the host plants and thus plays a key role in pathogenicity. The protein is Chitin synthase 1 of Verticillium dahliae (strain VdLs.17 / ATCC MYA-4575 / FGSC 10137) (Verticillium wilt).